Here is a 290-residue protein sequence, read N- to C-terminus: Glutamate racemase (290 aa).

Substrate contacts are provided by residues 24-25 (DS) and 56-57 (YG). The active-site Proton donor/acceptor is Cys87. 88 to 89 (NT) provides a ligand contact to substrate. Residue Cys199 is the Proton donor/acceptor of the active site. A substrate-binding site is contributed by 200-201 (TH). Residues 271–290 (GADGASLPDPPSPRIELTTT) are disordered.

It belongs to the aspartate/glutamate racemases family.

The enzyme catalyses L-glutamate = D-glutamate. It functions in the pathway cell wall biogenesis; peptidoglycan biosynthesis. Functionally, provides the (R)-glutamate required for cell wall biosynthesis. The sequence is that of Glutamate racemase from Deinococcus radiodurans (strain ATCC 13939 / DSM 20539 / JCM 16871 / CCUG 27074 / LMG 4051 / NBRC 15346 / NCIMB 9279 / VKM B-1422 / R1).